We begin with the raw amino-acid sequence, 1657 residues long: Alsin (1657 aa).

3 RCC1 repeats span residues 59–108, 109–167, and 169–218; these read DGEV…AVTD, NGVA…ALSI, and REIW…ALVQ. Positions 432–480 are disordered; it reads TGAQAGSSAIGPEGLKDSREEQVKQESMQGKKSSSLVDIREEETEGGSR. Over residues 445–455 the composition is skewed to basic and acidic residues; it reads GLKDSREEQVK. A compositionally biased stretch (polar residues) spans 456 to 467; that stretch reads QESMQGKKSSSL. S465, S466, S483, and S492 each carry phosphoserine. At T510 the chain carries Phosphothreonine. 2 RCC1 repeats span residues 525-576 and 578-627; these read RTEV…ALTA and SQVY…FLVD. At K533 the chain carries N6-acetyllysine. The DH domain occupies 690–885; it reads GYIASLHELA…ECLALHLGRK (196 aa). The 107-residue stretch at 901 to 1007 folds into the PH domain; the sequence is GKMTDSLRKP…RAISQAVDQA (107 aa). MORN repeat units lie at residues 1049-1071, 1072-1094, 1100-1122, 1123-1145, 1151-1173, 1175-1197, 1198-1220, and 1221-1244; these read YDGR…DGKM, YSGM…NKAM, YVGH…SGEV, FEGC…KLTS, FIGQ…TRGE, YMGM…FGLY, YEGN…DDTI, and YEGE…NGDY. S1335 is modified (phosphoserine). Positions 1513 to 1657 constitute a VPS9 domain; it reads KQPDIALLGF…YYQIQREKLN (145 aa).

In terms of assembly, forms a heteromeric complex with ALS2CL. Interacts with ALS2CL.

Functionally, may act as a GTPase regulator. Controls survival and growth of spinal motoneurons. This is Alsin (ALS2) from Homo sapiens (Human).